The sequence spans 317 residues: Transaldolase (317 aa).

Lysine 126 functions as the Schiff-base intermediate with substrate in the catalytic mechanism.

It belongs to the transaldolase family. Type 1 subfamily. Homodimer.

The protein resides in the cytoplasm. It catalyses the reaction D-sedoheptulose 7-phosphate + D-glyceraldehyde 3-phosphate = D-erythrose 4-phosphate + beta-D-fructose 6-phosphate. Its pathway is carbohydrate degradation; pentose phosphate pathway; D-glyceraldehyde 3-phosphate and beta-D-fructose 6-phosphate from D-ribose 5-phosphate and D-xylulose 5-phosphate (non-oxidative stage): step 2/3. Transaldolase is important for the balance of metabolites in the pentose-phosphate pathway. The sequence is that of Transaldolase from Burkholderia pseudomallei (strain K96243).